We begin with the raw amino-acid sequence, 338 residues long: Anthranilate phosphoribosyltransferase (338 aa).

5-phospho-alpha-D-ribose 1-diphosphate-binding positions include Gly78, 81 to 82 (GD), Thr86, 88 to 91 (NIST), 106 to 114 (KHGNRSVSS), and Ser118. Gly78 lines the anthranilate pocket. Position 90 (Ser90) interacts with Mg(2+). An anthranilate-binding site is contributed by Asn109. Arg164 contacts anthranilate. 2 residues coordinate Mg(2+): Asp223 and Glu224.

This sequence belongs to the anthranilate phosphoribosyltransferase family. In terms of assembly, homodimer. Mg(2+) serves as cofactor.

It catalyses the reaction N-(5-phospho-beta-D-ribosyl)anthranilate + diphosphate = 5-phospho-alpha-D-ribose 1-diphosphate + anthranilate. It participates in amino-acid biosynthesis; L-tryptophan biosynthesis; L-tryptophan from chorismate: step 2/5. Its function is as follows. Catalyzes the transfer of the phosphoribosyl group of 5-phosphorylribose-1-pyrophosphate (PRPP) to anthranilate to yield N-(5'-phosphoribosyl)-anthranilate (PRA). This chain is Anthranilate phosphoribosyltransferase, found in Bacillus licheniformis (strain ATCC 14580 / DSM 13 / JCM 2505 / CCUG 7422 / NBRC 12200 / NCIMB 9375 / NCTC 10341 / NRRL NRS-1264 / Gibson 46).